The following is a 692-amino-acid chain: Ena/VASP-like protein (692 aa).

The WH1 domain maps to 1–112 (MSEQSICQAR…NAMLFALNIM (112 aa)). Disordered regions lie at residues 116-310 (DGGP…VQKN), 466-518 (SAAM…YEES), and 531-650 (KLRK…NDVS). Polar residues-rich tracts occupy residues 123-132 (RQAQNIQNGP) and 159-169 (STTVSTLQINV). The span at 214–226 (SSKSTNKSSNRTS) shows a compositional bias: low complexity. A compositionally biased stretch (polar residues) spans 231–267 (LQNSHCGSEPSTSQSSAFSPIRPSNGTVSRSIKQISL). Low complexity-rich tracts occupy residues 288–310 (PSLS…VQKN) and 466–479 (SAAM…APAP). Over residues 480–506 (ASGPPPPPPPGPPPPSGGTPPPAPPLP) the composition is skewed to pro residues. Residues 522–542 (GLAAALAGAKLRKVQRPEDGS) form an EVH2 block A region. The tract at residues 522–689 (GLAAALAGAK…DAIRQELSRI (168 aa)) is EVH2. Positions 531–534 (KLRK) match the KLKR motif. Residues 563–580 (GGLMEEMNKLLAKRRKAA) are EVH2 block B. The span at 597 to 617 (EDASLSSSPVTRGPTPQNSSD) shows a compositional bias: polar residues. A compositionally biased stretch (basic and acidic residues) spans 618–628 (LGKKPWERSNS). Residues 655 to 689 (DFDRMKQEILEEVVRELHKVKEEIIDAIRQELSRI) form an EVH2 block C region.

This sequence belongs to the Ena/VASP family. As to expression, during embryonic and tadpole development, expressed in the cement gland, brain, neural tube, myotome and neural placodes, including the otic, lateral line and olfactory placodes. All isoforms show similar spatial expression patterns.

The protein resides in the cytoplasm. It is found in the cytoskeleton. It localises to the stress fiber. Its subcellular location is the cell projection. The protein localises to the lamellipodium. Ena/VASP proteins are actin-associated proteins involved in a range of processes dependent on cytoskeleton remodeling and cell polarity such as axon guidance and lamellipodial and filopodial dynamics in migrating cells. Evl enhances actin nucleation and polymerization. In Xenopus laevis (African clawed frog), this protein is Ena/VASP-like protein.